A 907-amino-acid polypeptide reads, in one-letter code: Translation initiation factor IF-2 (907 aa).

The disordered stretch occupies residues 26–317 (DAGMKKSSSD…KPKSMQHGFD (292 aa)). Composition is skewed to basic and acidic residues over residues 28-44 (GMKKSSSDQVSDEEKQK) and 101-248 (SAIE…DTDY). A compositionally biased stretch (basic residues) spans 299 to 308 (KGGRKGKLSK). The 170-residue stretch at 406–575 (PRAPVVTIMG…LLQAEVLELT (170 aa)) folds into the tr-type G domain. Positions 415–422 (GHVDHGKT) are G1. A GTP-binding site is contributed by 415–422 (GHVDHGKT). The G2 stretch occupies residues 440–444 (GITQH). The segment at 461–464 (DTPG) is G3. Residues 461–465 (DTPGH) and 515–518 (NKID) contribute to the GTP site. A G4 region spans residues 515 to 518 (NKID). Positions 551–553 (SAK) are G5.

It belongs to the TRAFAC class translation factor GTPase superfamily. Classic translation factor GTPase family. IF-2 subfamily.

It localises to the cytoplasm. Its function is as follows. One of the essential components for the initiation of protein synthesis. Protects formylmethionyl-tRNA from spontaneous hydrolysis and promotes its binding to the 30S ribosomal subunits. Also involved in the hydrolysis of GTP during the formation of the 70S ribosomal complex. The protein is Translation initiation factor IF-2 of Vibrio vulnificus (strain CMCP6).